The following is a 207-amino-acid chain: Serotonin N-acetyltransferase (207 aa).

A Phosphothreonine; by PKA modification is found at Thr31. Positions 35 to 196 (NEFRCLTPKD…TFTEMHCSLR (162 aa)) constitute an N-acetyltransferase domain. Residue Leu124 coordinates substrate. Residues 124 to 126 (LAV) and 132 to 137 (QQGKGS) contribute to the acetyl-CoA site. Residue Met159 coordinates substrate. Residue 168–170 (YQR) coordinates acetyl-CoA. Residue Ser205 is modified to Phosphoserine.

Belongs to the acetyltransferase family. AANAT subfamily. In terms of assembly, monomer. Interacts with several 14-3-3 proteins, including YWHAB, YWHAE, YWHAG and YWHAZ, preferentially when phosphorylated at Thr-31. Phosphorylation on Ser-205 also allows binding to YWHAZ, but with lower affinity. The interaction with YWHAZ considerably increases affinity for arylalkylamines and acetyl-CoA and protects the enzyme from dephosphorylation and proteasomal degradation. It may also prevent thiol-dependent inactivation. In terms of processing, cAMP-dependent phosphorylation on both N-terminal Thr-31 and C-terminal Ser-205 regulates AANAT activity by promoting interaction with 14-3-3 proteins. In terms of tissue distribution, high levels in pineal gland and retina.

The protein resides in the cytoplasm. The catalysed reaction is a 2-arylethylamine + acetyl-CoA = an N-acetyl-2-arylethylamine + CoA + H(+). It participates in aromatic compound metabolism; melatonin biosynthesis; melatonin from serotonin: step 1/2. Its function is as follows. Controls the night/day rhythm of melatonin production in the pineal gland. Catalyzes the N-acetylation of serotonin into N-acetylserotonin, the penultimate step in the synthesis of melatonin. The protein is Serotonin N-acetyltransferase (AANAT) of Bos taurus (Bovine).